Reading from the N-terminus, the 239-residue chain is 1-(5-phosphoribosyl)-5-[(5-phosphoribosylamino)methylideneamino] imidazole-4-carboxamide isomerase (239 aa).

Catalysis depends on aspartate 8, which acts as the Proton acceptor. The Proton donor role is filled by aspartate 129.

This sequence belongs to the HisA/HisF family.

The protein resides in the cytoplasm. The enzyme catalyses 1-(5-phospho-beta-D-ribosyl)-5-[(5-phospho-beta-D-ribosylamino)methylideneamino]imidazole-4-carboxamide = 5-[(5-phospho-1-deoxy-D-ribulos-1-ylimino)methylamino]-1-(5-phospho-beta-D-ribosyl)imidazole-4-carboxamide. It participates in amino-acid biosynthesis; L-histidine biosynthesis; L-histidine from 5-phospho-alpha-D-ribose 1-diphosphate: step 4/9. The protein is 1-(5-phosphoribosyl)-5-[(5-phosphoribosylamino)methylideneamino] imidazole-4-carboxamide isomerase of Bacillus cereus (strain AH187).